A 273-amino-acid polypeptide reads, in one-letter code: Release factor glutamine methyltransferase (273 aa).

Residues 109-113, aspartate 132, tryptophan 159, and asparagine 176 each bind S-adenosyl-L-methionine; that span reads GTGSG. Substrate is bound at residue 176-179; it reads NPPY.

Belongs to the protein N5-glutamine methyltransferase family. PrmC subfamily.

It carries out the reaction L-glutaminyl-[peptide chain release factor] + S-adenosyl-L-methionine = N(5)-methyl-L-glutaminyl-[peptide chain release factor] + S-adenosyl-L-homocysteine + H(+). In terms of biological role, methylates the class 1 translation termination release factors RF1/PrfA and RF2/PrfB on the glutamine residue of the universally conserved GGQ motif. The protein is Release factor glutamine methyltransferase of Neisseria gonorrhoeae (strain ATCC 700825 / FA 1090).